The primary structure comprises 235 residues: Ubiquinone/menaquinone biosynthesis C-methyltransferase UbiE (235 aa).

S-adenosyl-L-methionine contacts are provided by residues threonine 60, aspartate 80, 106 to 107 (DV), and serine 123.

The protein belongs to the class I-like SAM-binding methyltransferase superfamily. MenG/UbiE family.

It catalyses the reaction a 2-demethylmenaquinol + S-adenosyl-L-methionine = a menaquinol + S-adenosyl-L-homocysteine + H(+). It carries out the reaction a 2-methoxy-6-(all-trans-polyprenyl)benzene-1,4-diol + S-adenosyl-L-methionine = a 5-methoxy-2-methyl-3-(all-trans-polyprenyl)benzene-1,4-diol + S-adenosyl-L-homocysteine + H(+). Its pathway is quinol/quinone metabolism; menaquinone biosynthesis; menaquinol from 1,4-dihydroxy-2-naphthoate: step 2/2. It functions in the pathway cofactor biosynthesis; ubiquinone biosynthesis. In terms of biological role, methyltransferase required for the conversion of demethylmenaquinol (DMKH2) to menaquinol (MKH2) and the conversion of 2-polyprenyl-6-methoxy-1,4-benzoquinol (DDMQH2) to 2-polyprenyl-3-methyl-6-methoxy-1,4-benzoquinol (DMQH2). The polypeptide is Ubiquinone/menaquinone biosynthesis C-methyltransferase UbiE (Bdellovibrio bacteriovorus (strain ATCC 15356 / DSM 50701 / NCIMB 9529 / HD100)).